We begin with the raw amino-acid sequence, 157 residues long: Small ribosomal subunit protein uS7 (157 aa).

The protein belongs to the universal ribosomal protein uS7 family. Part of the 30S ribosomal subunit. Contacts proteins S9 and S11.

In terms of biological role, one of the primary rRNA binding proteins, it binds directly to 16S rRNA where it nucleates assembly of the head domain of the 30S subunit. Is located at the subunit interface close to the decoding center, probably blocks exit of the E-site tRNA. This Opitutus terrae (strain DSM 11246 / JCM 15787 / PB90-1) protein is Small ribosomal subunit protein uS7.